Consider the following 162-residue polypeptide: Probable tRNA (guanine(10)-N2)-dimethyltransferase (162 aa).

It belongs to the methyltransferase superfamily. Trm-G10 family. In terms of assembly, monomer.

The protein resides in the cytoplasm. The enzyme catalyses guanosine(10) in tRNA + 2 S-adenosyl-L-methionine = N(2)-dimethylguanosine(10) in tRNA + 2 S-adenosyl-L-homocysteine + 2 H(+). Its function is as follows. Catalyzes the adenosylmethionine-dependent methylation of the exocyclic amino group (N(2)) of guanosine at position 10 of various tRNAs. Acts via a two-step process that leads to the formation of either N(2)-monomethyl (m(2)G) or N(2)-dimethylguanosine (m(2)(2)G). The chain is Probable tRNA (guanine(10)-N2)-dimethyltransferase (trmG10) from Methanothermococcus thermolithotrophicus (Methanococcus thermolithotrophicus).